Consider the following 331-residue polypeptide: MTSFLTAARAEQEKLTPDTRRLRLFSGTSNPGLAREIAAYLGVPDGPRVCKRFADGELYVQIQESIRGCDVFLIQPTCAPVNDHLMELLIMVDACRRASARQITAVVPYYGYARADRKTAGRESITAKLTANLLVKSGVDRVLAMDLHSAQIQGYFDIPCDHIYGSPVLVDYLSTQNLDDIVVVSPDVGGVARARAFAKQMNDAPLAIIDKRRTGHNLAESLTVIGDVSGRTAILIDDMIDTGGTICAGARLLRQQGAKRVIACATHAVFSPPASERLSADGLFEQVVVTNSIPIQQERTFPQLQVLSVANMLGEAIWRIHEESSVSSMFR.

55 to 57 (DGE) is a binding site for ATP. 2 residues coordinate Mg(2+): His148 and Asp187. Lys211 is a catalytic residue. D-ribose 5-phosphate is bound by residues Arg213, Asp237, and 241–245 (DTGGT).

It belongs to the ribose-phosphate pyrophosphokinase family. Class I subfamily. Homohexamer. Mg(2+) is required as a cofactor.

The protein localises to the cytoplasm. The catalysed reaction is D-ribose 5-phosphate + ATP = 5-phospho-alpha-D-ribose 1-diphosphate + AMP + H(+). It functions in the pathway metabolic intermediate biosynthesis; 5-phospho-alpha-D-ribose 1-diphosphate biosynthesis; 5-phospho-alpha-D-ribose 1-diphosphate from D-ribose 5-phosphate (route I): step 1/1. Functionally, involved in the biosynthesis of the central metabolite phospho-alpha-D-ribosyl-1-pyrophosphate (PRPP) via the transfer of pyrophosphoryl group from ATP to 1-hydroxyl of ribose-5-phosphate (Rib-5-P). In Parasynechococcus marenigrum (strain WH8102), this protein is Ribose-phosphate pyrophosphokinase.